Consider the following 417-residue polypeptide: Serine hydroxymethyltransferase (417 aa).

(6S)-5,6,7,8-tetrahydrofolate-binding positions include L121 and G125–L127. Position 229 is an N6-(pyridoxal phosphate)lysine (K229). S355–F357 contributes to the (6S)-5,6,7,8-tetrahydrofolate binding site.

The protein belongs to the SHMT family. Homodimer. The cofactor is pyridoxal 5'-phosphate.

It is found in the cytoplasm. It carries out the reaction (6R)-5,10-methylene-5,6,7,8-tetrahydrofolate + glycine + H2O = (6S)-5,6,7,8-tetrahydrofolate + L-serine. It functions in the pathway one-carbon metabolism; tetrahydrofolate interconversion. It participates in amino-acid biosynthesis; glycine biosynthesis; glycine from L-serine: step 1/1. Its function is as follows. Catalyzes the reversible interconversion of serine and glycine with tetrahydrofolate (THF) serving as the one-carbon carrier. This reaction serves as the major source of one-carbon groups required for the biosynthesis of purines, thymidylate, methionine, and other important biomolecules. Also exhibits THF-independent aldolase activity toward beta-hydroxyamino acids, producing glycine and aldehydes, via a retro-aldol mechanism. In Yersinia pestis bv. Antiqua (strain Antiqua), this protein is Serine hydroxymethyltransferase.